A 310-amino-acid chain; its full sequence is DDRGK domain-containing protein 1 (310 aa).

The chain crosses the membrane as a helical span at residues 1–21 (MAAIIYLAIAAVASILLFVAV). Over 22 to 310 (KLLSTDTKTE…DSPAEISVNA (289 aa)) the chain is Cytoplasmic. 2 disordered regions span residues 38 to 85 (VGEL…DEYQ) and 110 to 162 (KAEK…LKEE). Residues 52 to 70 (PRARARRGLRNKTNRSKTQ) show a composition bias toward basic residues. Residues 76 to 85 (DYDDYDDEYQ) are compositionally biased toward acidic residues.

Belongs to the DDRGK1 family.

The protein resides in the endoplasmic reticulum membrane. Its function is as follows. Substrate adapter for ufmylation, the covalent attachment of the ubiquitin-like modifier UFM1 to substrate proteins. This chain is DDRGK domain-containing protein 1, found in Trichoplax adhaerens (Trichoplax reptans).